Consider the following 190-residue polypeptide: Iron-sulfur protein (190 aa).

The 29-residue stretch at 8–36 (VIIYANPDHCLSCHSCELACAVAHSGGHD) folds into the 4Fe-4S ferredoxin-type 1 domain. Residues Cys17, Cys20, Cys23, Cys27, Cys65, Cys68, Cys73, Cys77, Cys96, Cys99, Cys102, Cys106, Cys133, Cys136, Cys150, and Cys154 each contribute to the [4Fe-4S] cluster site. 4Fe-4S ferredoxin-type domains lie at 87 to 116 (GQVQ…VRSE) and 133 to 164 (CDLC…MVDL).

In terms of biological role, the carbon monoxide dehydrogenase (CODH) oxidizes carbon monoxide coupled, via CooF, to the reduction of a hydrogen cation by a hydrogenase (probably CooH). CooF is required in stoichiometric amounts in vitro for anchoring CODH to the membrane as well as for conveying the electrons to the hydrogenase. In Rhodospirillum rubrum, this protein is Iron-sulfur protein (cooF).